The primary structure comprises 87 residues: Phosphoribosyl-ATP pyrophosphatase (87 aa).

Belongs to the PRA-PH family.

It is found in the cytoplasm. The catalysed reaction is 1-(5-phospho-beta-D-ribosyl)-ATP + H2O = 1-(5-phospho-beta-D-ribosyl)-5'-AMP + diphosphate + H(+). It participates in amino-acid biosynthesis; L-histidine biosynthesis; L-histidine from 5-phospho-alpha-D-ribose 1-diphosphate: step 2/9. This is Phosphoribosyl-ATP pyrophosphatase from Clavibacter sepedonicus (Clavibacter michiganensis subsp. sepedonicus).